A 331-amino-acid polypeptide reads, in one-letter code: UDP-N-acetylenolpyruvoylglucosamine reductase (331 aa).

Residues R54–G221 form the FAD-binding PCMH-type domain. The active site involves R200. Residue S251 is the Proton donor of the active site. E321 is an active-site residue.

The protein belongs to the MurB family. FAD is required as a cofactor.

The protein resides in the cytoplasm. It catalyses the reaction UDP-N-acetyl-alpha-D-muramate + NADP(+) = UDP-N-acetyl-3-O-(1-carboxyvinyl)-alpha-D-glucosamine + NADPH + H(+). It functions in the pathway cell wall biogenesis; peptidoglycan biosynthesis. In terms of biological role, cell wall formation. The polypeptide is UDP-N-acetylenolpyruvoylglucosamine reductase (Trichormus variabilis (strain ATCC 29413 / PCC 7937) (Anabaena variabilis)).